The chain runs to 94 residues: Co-chaperonin GroES (94 aa).

It belongs to the GroES chaperonin family. Heptamer of 7 subunits arranged in a ring. Interacts with the chaperonin GroEL.

Its subcellular location is the cytoplasm. Its function is as follows. Together with the chaperonin GroEL, plays an essential role in assisting protein folding. The GroEL-GroES system forms a nano-cage that allows encapsulation of the non-native substrate proteins and provides a physical environment optimized to promote and accelerate protein folding. GroES binds to the apical surface of the GroEL ring, thereby capping the opening of the GroEL channel. This Exiguobacterium sibiricum (strain DSM 17290 / CCUG 55495 / CIP 109462 / JCM 13490 / 255-15) protein is Co-chaperonin GroES.